The following is a 231-amino-acid chain: UPF0749 protein YlxW (231 aa).

An N-terminal signal peptide occupies residues 1–34 (MRGKSAVLLSLIMLIAGFLISFSFQMTKENNKSA). Positions 44-94 (YALRDELLKQEKENKKFEKELYQKQNKVRQAENKLKKEKSEYYNVLEDTEK) form a coiled coil.

It belongs to the UPF0749 family.

Its function is as follows. May be involved in cell division and sporulation. This Bacillus subtilis (strain 168) protein is UPF0749 protein YlxW (ylxW).